The chain runs to 130 residues: UPF0146 protein AF_0739.1 (130 aa).

This sequence belongs to the UPF0146 family.

This chain is UPF0146 protein AF_0739.1, found in Archaeoglobus fulgidus (strain ATCC 49558 / DSM 4304 / JCM 9628 / NBRC 100126 / VC-16).